The chain runs to 59 residues: Large ribosomal subunit protein bL32 (59 aa).

Residues 1–20 form a disordered region; the sequence is MAVPRNRHSNARKNIRRSHH.

It belongs to the bacterial ribosomal protein bL32 family.

The polypeptide is Large ribosomal subunit protein bL32 (Chlamydia trachomatis serovar A (strain ATCC VR-571B / DSM 19440 / HAR-13)).